We begin with the raw amino-acid sequence, 311 residues long: Cytosolic Fe-S cluster assembly factor Nubp1 homolog (311 aa).

Cys9, Cys23, Cys26, and Cys32 together coordinate [4Fe-4S] cluster. Residue 63 to 70 (GKGGVGKS) participates in ATP binding. Residues Cys241 and Cys244 each contribute to the [4Fe-4S] cluster site.

Belongs to the Mrp/NBP35 ATP-binding proteins family. NUBP1/NBP35 subfamily. Heterotetramer of 2 Nubp1 and 2 Nubp2 chains. [4Fe-4S] cluster is required as a cofactor.

The protein resides in the cytoplasm. In terms of biological role, component of the cytosolic iron-sulfur (Fe/S) protein assembly (CIA) machinery. Required for maturation of extramitochondrial Fe-S proteins. The Nubp1-Nubp2 heterotetramer forms a Fe-S scaffold complex, mediating the de novo assembly of an Fe-S cluster and its transfer to target apoproteins. This is Cytosolic Fe-S cluster assembly factor Nubp1 homolog from Drosophila grimshawi (Hawaiian fruit fly).